A 329-amino-acid polypeptide reads, in one-letter code: Putative glycosyltransferase CsbB (329 aa).

The next 2 helical transmembrane spans lie at 231–251 (CFYT…ATFV) and 264–284 (FTII…LGII).

Belongs to the glycosyltransferase 2 family. GtrB subfamily.

The protein localises to the cell membrane. In Bacillus subtilis (strain 168), this protein is Putative glycosyltransferase CsbB (csbB).